The primary structure comprises 1171 residues: MAVCGRVRRMFRLSAALQLLLLVAAGVQNSHGQGQGLGVNFGPFAGQAGGGNPVGQQPPQLPQLSQQQQQQQPPPQQQQPFPAGGLPARRGGAGPGGTGGGWKLAEEESCREDVTRVCPKHTWSNNLAVLECLQDVREPENEISSDCNHLLWNYKLNLTTDPKFESVAREVCKSTISEIKECAEEPVGKGYMVSCLVDHRGNITEYQCHQYITKMTAIIFSDYRLICGFMDDCKNDINLLKCGSIRLGEKDAHSQGEVVSCLEKGLVKEAEEKEPKIQVSELCKKAILRVAELSSDDFHLDRHLYFACRDDRERFCENTQAGEGRVYKCLFNHKFEESMSEKCREALTTRQKLIAQDYKVSYSLAKSCKSDLKKYRCNVENLPRSREARLSYLLMCLESAVHRGRQVSSECQGEMLDYRRMLMEDFSLSPEIILSCRGEIEHHCSGLHRKGRTLHCLMKVVRGEKGSLGMNCQQALQTLIQETDPGADYRIDRALNEACESVIQTACKHIRSGDPMILSCLMEHLYTEKMVEDCEHRLLELQYFISRDWKLDPVLYRKCQGDASRLCHTHGWNETSELMPPGAVFSCLYRHAYRTEEQGRRLSRECRAEVQRILHQRAMDVKLDPALQDKCLIDLGKWCSEKTETGQELECLQDHLDDLAVECRDIVGNLTELESEDIQIEALLMRACEPIIHNFCHDVADNQIDSGDLMECLIQNKHQKDMNEKCAIGVTHFQLVQMKDFRFSYKFKMACKEDVLKLCPNIKKKVDVVICLSTTVRNDTLQEAKEHRVSLKCRKQLRVEELEMTEDIRLEPDLYEACKSDIKNYCSTVQYGNAQIIECLKENKKQLSTRCHQRVFKLQETEMMDPELDYTLMRVCKQMIKRFCPEADSKTMLQCLKQNKNSELMDPKCKQMITKRQITQNTDYRLNPVLRKACKADIPKFCHGILTKAKDDSELEGQVISCLKLRYADQRLSSDCEDQIRIITQESALDYRLDPQLQLHCSDEIANLCAEEAAAQEQTGQVEECLKVNLLKIRTELCKKEVLNMLKESKADIFVDPVLHTACALDIKHHCAAITPGRGRQMSCLMEALEDKRVRLQPECKKRLNDRIEMWSYAAKVAPADGFSDLAMQVMTSPSKNYILSVISGSICILFLIGLMCGRITKRVTRELKDR.

The first 32 residues, 1-32 (MAVCGRVRRMFRLSAALQLLLLVAAGVQNSHG), serve as a signal peptide directing secretion. Over 33 to 1137 (QGQGLGVNFG…MQVMTSPSKN (1105 aa)) the chain is Extracellular. The disordered stretch occupies residues 43–105 (PFAGQAGGGN…GGTGGGWKLA (63 aa)). Composition is skewed to low complexity over residues 54–71 (VGQQ…QQQQ) and 78–90 (QQPF…PARR). Residues 91 to 102 (GGAGPGGTGGGW) are compositionally biased toward gly residues. Cys-rich GLG1 repeat units follow at residues 108 to 141 (ESCR…EPEN), 142 to 204 (EISS…GNIT), 207 to 270 (QCHQ…VKEA), 278 to 338 (QVSE…FEES), 339 to 405 (MSEK…HRGR), 406 to 465 (QVSS…RGEK), 467 to 529 (SLGM…YTEK), 530 to 596 (MVED…YRTE), 601 to 660 (RLSR…DDLA), 662 to 720 (ECRD…KHQK), 721 to 780 (DMNE…RNDT), 788 to 848 (RVSL…KQLS), 850 to 903 (RCHQ…KNSE), 904 to 971 (LMDP…ADQR), 972 to 1027 (LSSD…ECLK), and 1033 to 1093 (IRTE…EDKR). 2 N-linked (GlcNAc...) asparagine glycosylation sites follow: Asn157 and Asn202. Asn573 is a glycosylation site (N-linked (GlcNAc...) asparagine). 2 N-linked (GlcNAc...) asparagine glycosylation sites follow: Asn669 and Asn778. The residue at position 953 (Ser953) is a Phosphoserine. Residues 1138–1158 (YILSVISGSICILFLIGLMCG) form a helical membrane-spanning segment. The Cytoplasmic portion of the chain corresponds to 1159–1171 (RITKRVTRELKDR).

In terms of processing, fucosylation is essential for binding to E-selectin. Post-translationally, N-glycosylated. Contains sialic acid residues. In terms of tissue distribution, widely expressed; found in kidney, pancreatic islets, parathyroid, thyroid, adrenal tissue, brain neurons, astrocytes, adenohypophysis, cultured pheochromocytoma cells.

Its subcellular location is the golgi apparatus membrane. The protein localises to the golgi outpost. It localises to the cytoplasm. The protein resides in the cytoskeleton. It is found in the microtubule organizing center. Its function is as follows. Binds fibroblast growth factor and E-selectin (cell-adhesion lectin on endothelial cells mediating the binding of neutrophils). This is Golgi apparatus protein 1 (Glg1) from Rattus norvegicus (Rat).